A 467-amino-acid chain; its full sequence is Serine/threonine-protein phosphatase 2A 56 kDa regulatory subunit epsilon isoform (467 aa).

A disordered region spans residues 1–40 (MSSAPTTPPSVDKVDGFSRKSVRKARQKRSQSSSQFRSQG). Ser-2 carries the post-translational modification N-acetylserine. A Phosphothreonine modification is found at Thr-7. The span at 20–29 (KSVRKARQKR) shows a compositional bias: basic residues. A phosphoserine mark is found at Ser-30, Ser-32, and Ser-34. Positions 30–40 (SQSSSQFRSQG) are enriched in low complexity.

This sequence belongs to the phosphatase 2A regulatory subunit B56 family. As to quaternary structure, found in a complex with at least ARL2, PPP2CB; PPP2R1A, PPP2R2A, PPP2R5E and TBCD. PP2A consists of a common heterodimeric core enzyme, composed of a 36 kDa catalytic subunit (subunit C) and a 65 kDa constant regulatory subunit (PR65 or subunit A), that associates with a variety of regulatory subunits. Proteins that associate with the core dimer include three families of regulatory subunits B (the R2/B/PR55/B55, R3/B''/PR72/PR130/PR59 and R5/B'/B56 families), the 48 kDa variable regulatory subunit, viral proteins, and cell signaling molecules. Interacts with SGO1. Post-translationally, phosphorylated on serine residues.

It is found in the cytoplasm. The B regulatory subunit might modulate substrate selectivity and catalytic activity, and might also direct the localization of the catalytic enzyme to a particular subcellular compartment. This Homo sapiens (Human) protein is Serine/threonine-protein phosphatase 2A 56 kDa regulatory subunit epsilon isoform (PPP2R5E).